We begin with the raw amino-acid sequence, 434 residues long: MEASVAPPALRNAPCAGVNAACLSAADDAVAIAIAQETTRQRESIELIASENFVSKAVLEAQGSVLTNKYAEGYPQRRYYGGCANVDRVEDLAIARLNQLFGSTYANVQPHSGSQANQAVFLALLAPGDTILGLDLKAGGHLTHGAPVNISGRWFTAVSYGVDPRTHLIDMEQMADLARRHRPKLLIAGGSAYPRLLDFARFRQIADEVGAILMVDMAHFAGLVAGGVYPSPVPFADVITSTTHKTLRGPRGGFVLTNDAAIAKKINSAVFPGLQGGPLMHIIAAKAVAFGEALDPSFKIYARRVVENCRVLAQTLLDGGLAITSGGTDCHLAVVDLRPLGVTGTIAEQALESIGITLNKNAIPNDPEKPMVTSGIRVGSAAGTSRGFGPEEYRRIAALILETLHAVRAGTLEADREGIRTRVRSLVAGFPLPY.

(6S)-5,6,7,8-tetrahydrofolate-binding positions include Leu136 and 140 to 142 (GHL). Lys245 bears the N6-(pyridoxal phosphate)lysine mark.

It belongs to the SHMT family. In terms of assembly, homodimer. Pyridoxal 5'-phosphate is required as a cofactor.

It is found in the cytoplasm. The catalysed reaction is (6R)-5,10-methylene-5,6,7,8-tetrahydrofolate + glycine + H2O = (6S)-5,6,7,8-tetrahydrofolate + L-serine. It participates in one-carbon metabolism; tetrahydrofolate interconversion. The protein operates within amino-acid biosynthesis; glycine biosynthesis; glycine from L-serine: step 1/1. Its function is as follows. Catalyzes the reversible interconversion of serine and glycine with tetrahydrofolate (THF) serving as the one-carbon carrier. This reaction serves as the major source of one-carbon groups required for the biosynthesis of purines, thymidylate, methionine, and other important biomolecules. Also exhibits THF-independent aldolase activity toward beta-hydroxyamino acids, producing glycine and aldehydes, via a retro-aldol mechanism. This is Serine hydroxymethyltransferase 1 from Rhodospirillum rubrum (strain ATCC 11170 / ATH 1.1.1 / DSM 467 / LMG 4362 / NCIMB 8255 / S1).